Here is a 620-residue protein sequence, read N- to C-terminus: Cilia- and flagella-associated protein 52 (620 aa).

WD repeat units follow at residues 62–106, 109–150, 156–195, 288–327, 330–369, 372–411, 415–454, 459–498, 500–539, 543–582, and 585–620; these read GHGN…LLAR, LHKG…AICG, LNVG…RKIW, QLQG…ETLI, CHFD…ELLR, VPNM…LMYV, AHRI…QKLE, EHKS…RNQM, LANT…VIRE, SLSG…VTHV, and GHSG…PYTS.

It belongs to the CFAP52 family. Microtubule inner protein component of sperm flagellar doublet microtubules. Interacts with BRCA2. Interacts with the CCT chaperonin complex. Interacts with HSP70. Interacts with AK8. Interacts with CFAP45. Interacts with DNAI1. Interacts with IQDC. As to expression, expressed in respiratory cells and sperm (at protein level). Highly expressed in testis. Up-regulated in hepatocellular carcinoma (HCC).

The protein resides in the cytoplasm. The protein localises to the cytoskeleton. It localises to the cilium axoneme. It is found in the flagellum axoneme. Functionally, microtubule inner protein (MIP) part of the dynein-decorated doublet microtubules (DMTs) in cilia axoneme. Important for proper ciliary and flagellar beating. May act in cooperation with CFAP45 and axonemal dynein subunit DNAH11. May play a role in cell growth and/or survival. The protein is Cilia- and flagella-associated protein 52 of Homo sapiens (Human).